A 795-amino-acid polypeptide reads, in one-letter code: Phospholipase A-2-activating protein (795 aa).

WD repeat units lie at residues 17 to 56 (HELDVRGLVCCAYPPGAFVSVSRDRTTRLWAPDSPNRSFT), 63 to 107 (GHSN…PLYI), 110 to 148 (GHKNTVCSLSSGKFGTLLSGSWDTTAKVWLNDKCMMTLQ), 149 to 188 (GHTAAVWAVKILPEQGLMLTGSADKTVKLWKAGRCERTFS), 190 to 227 (HEDCVRGLAILSETEFLSCANDASIRRWQITGECLEVY), 229 to 268 (GHTNYIYSISVFPNCRDFVTTAEDRSLRIWKHGECAQTIR), and 270 to 307 (PAQSIWCCCVLDNGDIVVGASDGIIRVFTESEDRTASA). Phosphoserine is present on S50. Positions 366 to 465 (QWSVSEGRWI…KGQMLGLGNP (100 aa)) constitute a PFU domain. K529 bears the N6-acetyllysine mark. In terms of domain architecture, PUL spans 533–794 (IYFPKKEAVT…SECCRFILNL (262 aa)). ARM repeat units lie at residues 546 to 588 (ANPT…NSSS), 589 to 620 (EKPTVQQLQILWKAINCPEDIVFPALDILRLS), 621 to 669 (IKHP…CFVG), 670 to 715 (QAGQ…CFHK), 716 to 755 (DHNIEGKAQCLSLISTILEVVQDLEATFRLLVALGTLISD), and 756 to 795 (DSNAVQLAKSLGVDSQIKKYSSVSEPAKVSECCRFILNLL).

The protein belongs to the WD repeat PLAP family. In terms of assembly, interacts with ubiquitin. Interacts with UBXN6, VCP and YOD1; may form a complex involved in macroautophagy.

The protein localises to the nucleus. It is found in the cytoplasm. The protein resides in the synapse. Plays a role in protein ubiquitination, sorting and degradation through its association with VCP. Involved in ubiquitin-mediated membrane proteins trafficking to late endosomes in an ESCRT-dependent manner, and hence plays a role in synaptic vesicle recycling. May play a role in macroautophagy, regulating for instance the clearance of damaged lysosomes. Plays a role in cerebellar Purkinje cell development. Positively regulates cytosolic and calcium-independent phospholipase A2 activities in a tumor necrosis factor alpha (TNF-alpha)- or lipopolysaccharide (LPS)-dependent manner, and hence prostaglandin E2 biosynthesis. This is Phospholipase A-2-activating protein (PLAA) from Homo sapiens (Human).